The following is a 137-amino-acid chain: Ribosome-binding factor A (137 aa).

This sequence belongs to the RbfA family. As to quaternary structure, monomer. Binds 30S ribosomal subunits, but not 50S ribosomal subunits or 70S ribosomes.

Its subcellular location is the cytoplasm. Its function is as follows. One of several proteins that assist in the late maturation steps of the functional core of the 30S ribosomal subunit. Associates with free 30S ribosomal subunits (but not with 30S subunits that are part of 70S ribosomes or polysomes). Required for efficient processing of 16S rRNA. May interact with the 5'-terminal helix region of 16S rRNA. In Allorhizobium ampelinum (strain ATCC BAA-846 / DSM 112012 / S4) (Agrobacterium vitis (strain S4)), this protein is Ribosome-binding factor A.